The primary structure comprises 210 residues: Tumor protein D53 homolog (210 aa).

Positions Val-22–Met-73 form a coiled coil. Over residues Ser-185–Ala-197 the composition is skewed to polar residues. The disordered stretch occupies residues Ser-185–Cys-210.

It belongs to the TPD52 family. As to quaternary structure, forms a homodimer or heterodimer with other members of the family.

In Gallus gallus (Chicken), this protein is Tumor protein D53 homolog (TPD52L1).